A 320-amino-acid chain; its full sequence is Metapyrocatechase 2 (320 aa).

Disordered regions lie at residues methionine 1–histidine 21 and glycine 131–glycine 153. VOC domains lie at serine 25 to glycine 131 and arginine 167 to aspartate 282. Fe cation contacts are provided by histidine 170, histidine 227, and glutamate 278.

It belongs to the extradiol ring-cleavage dioxygenase family. It depends on Fe(2+) as a cofactor.

The enzyme catalyses catechol + O2 = (2Z,4E)-2-hydroxy-6-oxohexa-2,4-dienoate + H(+). The sequence is that of Metapyrocatechase 2 (mcpII) from Cupriavidus necator (Alcaligenes eutrophus).